Here is a 120-residue protein sequence, read N- to C-terminus: Large ribosomal subunit protein bL17 (120 aa).

This sequence belongs to the bacterial ribosomal protein bL17 family. In terms of assembly, part of the 50S ribosomal subunit. Contacts protein L32.

This chain is Large ribosomal subunit protein bL17, found in Mesomycoplasma hyopneumoniae (strain J / ATCC 25934 / NCTC 10110) (Mycoplasma hyopneumoniae).